A 360-amino-acid polypeptide reads, in one-letter code: Small ribosomal subunit protein mS22 (360 aa).

S54 is subject to Phosphoserine. K211 carries the N6-acetyllysine modification.

This sequence belongs to the mitochondrion-specific ribosomal protein mS22 family. As to quaternary structure, component of the mitochondrial small ribosomal subunit (mt-SSU). Mature mammalian 55S mitochondrial ribosomes consist of a small (28S) and a large (39S) subunit. The 28S small subunit contains a 12S ribosomal RNA (12S mt-rRNA) and 30 different proteins. The 39S large subunit contains a 16S rRNA (16S mt-rRNA), a copy of mitochondrial valine transfer RNA (mt-tRNA(Val)), which plays an integral structural role, and 52 different proteins.

Its subcellular location is the mitochondrion. The sequence is that of Small ribosomal subunit protein mS22 (MRPS22) from Homo sapiens (Human).